The sequence spans 444 residues: 23S rRNA (uracil(1939)-C(5))-methyltransferase RlmD (444 aa).

Residues arginine 5 to glycine 67 enclose the TRAM domain. Cysteine 80, cysteine 86, cysteine 89, and cysteine 168 together coordinate [4Fe-4S] cluster. Glutamine 276, phenylalanine 305, asparagine 310, glutamate 326, aspartate 353, and aspartate 374 together coordinate S-adenosyl-L-methionine. Cysteine 400 functions as the Nucleophile in the catalytic mechanism.

This sequence belongs to the class I-like SAM-binding methyltransferase superfamily. RNA M5U methyltransferase family. RlmD subfamily.

It catalyses the reaction uridine(1939) in 23S rRNA + S-adenosyl-L-methionine = 5-methyluridine(1939) in 23S rRNA + S-adenosyl-L-homocysteine + H(+). Its function is as follows. Catalyzes the formation of 5-methyl-uridine at position 1939 (m5U1939) in 23S rRNA. This Xanthomonas axonopodis pv. citri (strain 306) protein is 23S rRNA (uracil(1939)-C(5))-methyltransferase RlmD.